We begin with the raw amino-acid sequence, 386 residues long: Methionine aminopeptidase 1 (386 aa).

The segment at 6 to 59 adopts a C6H2-type zinc-finger fold; it reads TRECETEGCHSEAKLQCPTCIKLGIQGSYFCSQECFKGSWATHKLLHKKAKEDK. Cys9, Cys14, Cys22, Cys25, Cys36, Cys40, His48, and His52 together coordinate Zn(2+). Residue His202 coordinates a protein. Residues Asp219, Asp230, and His293 each contribute to the Zn(2+) site. A protein is bound at residue His300. Residues Glu326 and Glu357 each coordinate Zn(2+).

Belongs to the peptidase M24A family. Methionine aminopeptidase type 1 subfamily. As to quaternary structure, associates with the 60S ribosomal subunit of the 80S translational complex. Requires Zn(2+) as cofactor. Co(2+) is required as a cofactor. The cofactor is Mn(2+). Fe(2+) serves as cofactor.

The protein resides in the cytoplasm. It carries out the reaction Release of N-terminal amino acids, preferentially methionine, from peptides and arylamides.. Cotranslationally removes the N-terminal methionine from nascent proteins. The N-terminal methionine is often cleaved when the second residue in the primary sequence is small and uncharged (Met-Ala-, Cys, Gly, Pro, Ser, Thr, or Val). This Danio rerio (Zebrafish) protein is Methionine aminopeptidase 1 (metap1).